The chain runs to 347 residues: Metacaspase-2 (347 aa).

Positions 1–55 (MCSLITQLCDAGQLADYVGLGWLNAVSSQPYLVQALGLQPPPRRVDVDAAFRDAK) are excised as a propeptide. Residues 1–70 (MCSLITQLCD…QPWVATPLPG (70 aa)) are regulates substrate access to the active site. The active site involves His158. Positions 173, 189, and 190 each coordinate Ca(2+). Cys213 is a catalytic residue. Position 220 (Asp220) interacts with Ca(2+).

This sequence belongs to the peptidase C14B family. In terms of assembly, monomer. In terms of processing, auto-proteolytic cleavage of the propeptide after Lys-55 and between the large and small subunits after Lys-268 is required for catalytic activity towards large protein substrates but is dispensable towards small oligopeptide substrates. After processing, the propeptide and the large and small subunits remain associated by non-covalent bonds. In vivo, the unprocessed enzyme appears to be the predominant form.

It localises to the recycling endosome. Activated by Ca(2+). In response to calcium binding, the 280-loop, a disordered loop consisting of residues 269-275, undergoes a conformational change which stabilizes substrates in the active site. The binding to the substrate triggers the release of the N-terminal region resulting in the activation of the enzyme. Proteolytic cleavage is required for catalytic activity towards large protein substrates. Cysteine protease that cleaves specifically after arginine or lysine residues. This chain is Metacaspase-2, found in Trypanosoma brucei brucei (strain 927/4 GUTat10.1).